A 1223-amino-acid polypeptide reads, in one-letter code: DNA-directed RNA polymerase subunit beta'' (1223 aa).

Positions 233, 307, 314, and 317 each coordinate Zn(2+).

Belongs to the RNA polymerase beta' chain family. RpoC2 subfamily. As to quaternary structure, in plastids the minimal PEP RNA polymerase catalytic core is composed of four subunits: alpha, beta, beta', and beta''. When a (nuclear-encoded) sigma factor is associated with the core the holoenzyme is formed, which can initiate transcription. The cofactor is Zn(2+).

The protein resides in the plastid. It localises to the chloroplast. It catalyses the reaction RNA(n) + a ribonucleoside 5'-triphosphate = RNA(n+1) + diphosphate. Functionally, DNA-dependent RNA polymerase catalyzes the transcription of DNA into RNA using the four ribonucleoside triphosphates as substrates. This Mesostigma viride (Green alga) protein is DNA-directed RNA polymerase subunit beta''.